Here is a 430-residue protein sequence, read N- to C-terminus: Glucose-6-phosphate isomerase (430 aa).

Glutamate 284 functions as the Proton donor in the catalytic mechanism. Residues histidine 305 and lysine 420 contribute to the active site.

The protein belongs to the GPI family.

It localises to the cytoplasm. It carries out the reaction alpha-D-glucose 6-phosphate = beta-D-fructose 6-phosphate. The protein operates within carbohydrate biosynthesis; gluconeogenesis. It functions in the pathway carbohydrate degradation; glycolysis; D-glyceraldehyde 3-phosphate and glycerone phosphate from D-glucose: step 2/4. In terms of biological role, catalyzes the reversible isomerization of glucose-6-phosphate to fructose-6-phosphate. The chain is Glucose-6-phosphate isomerase from Mycoplasmopsis synoviae (strain 53) (Mycoplasma synoviae).